We begin with the raw amino-acid sequence, 513 residues long: Solute carrier family 2, facilitated glucose transporter member 10 (513 aa).

Over 1 to 6 the chain is Cytoplasmic; sequence MGCSVL. A helical transmembrane segment spans residues 7 to 27; sequence LLTITVSTLGGLVFGYELGII. Residues 28-46 are Extracellular-facing; it reads SGALPQLQTHFSLGCVQQE. The helical transmembrane segment at 47 to 67 threads the bilayer; that stretch reads AVVSALLIGSLFASIIGGWLI. The Cytoplasmic segment spans residues 68-80; the sequence is DRHGRRTSILLSN. The helical transmembrane segment at 81-101 threads the bilayer; that stretch reads LLILAGSVILTTGTSFFALVI. Over 102–104 the chain is Extracellular; sequence GRA. A helical transmembrane segment spans residues 105-125; sequence VIGFAMTVSSMSCCIFVSEMV. The Cytoplasmic portion of the chain corresponds to 126-130; sequence TPERR. The chain crosses the membrane as a helical span at residues 131–151; sequence GLMVTLYEVGITVGILIAYAV. Over 152-164 the chain is Extracellular; the sequence is NYIFNNVPLTGWR. A helical membrane pass occupies residues 165–185; that stretch reads YMFGFAIIPSLIQLASIVLLP. At 186-236 the chain is on the cytoplasmic side; the sequence is KQAEVFVIHDDDSRQADRLTEETETSNQHQQSEKYGVSDLFKSKDNMRRRT. Residues 237–257 form a helical membrane-spanning segment; the sequence is VIGVGLVLSQQFTGQPNVLFY. D-glucose is bound at residue 246–247; it reads QQ. Over 258–272 the chain is Extracellular; that stretch reads ASTILFSVGFQSNAS. N-linked (GlcNAc...) asparagine glycosylation occurs at N270. A helical transmembrane segment spans residues 273–293; that stretch reads AILASVGFGIVKVIATLLAML. Residues 294-301 are Cytoplasmic-facing; it reads CSDRAGRR. The helical transmembrane segment at 302 to 322 threads the bilayer; it reads SLLIGGCSMLAVGLILTGFLC. At 323–376 the chain is on the extracellular side; sequence RQSVIDTTKRCTSVGPHSNLTLSAEHDEGVGFSSQTLDVHEHLRSFSQSEDIYK. An N-linked (GlcNAc...) asparagine glycan is attached at N341. The chain crosses the membrane as a helical span at residues 377-397; that stretch reads WIIFTCLMAVVSAFSVSFGPM. The Cytoplasmic portion of the chain corresponds to 398–422; sequence TWVVLSEIFPKDIRGRAFSFINCFN. Residue W399 participates in D-glucose binding. 2 helical membrane-spanning segments follow: residues 423 to 443 and 444 to 464; these read VGANLIVSFSFLSIIDVIGLS and GVFLMYGVVGIAGVVFIYLVL. At 465–513 the chain is on the cytoplasmic side; it reads PETKGKSLQDIDRELSQTRMIHRQELCSIFQRRRFSPGYQRVQLTSTAT.

This sequence belongs to the major facilitator superfamily. Sugar transporter (TC 2.A.1.1) family. Glucose transporter subfamily.

It is found in the endomembrane system. The protein resides in the cytoplasm. The protein localises to the perinuclear region. The enzyme catalyses D-glucose(out) = D-glucose(in). Functionally, facilitative glucose transporter required for the development of the cardiovascular system. In Danio rerio (Zebrafish), this protein is Solute carrier family 2, facilitated glucose transporter member 10.